Here is a 232-residue protein sequence, read N- to C-terminus: MKIGIIGAMEEEVTLLRDKIEKRQTISLGGCEIYTGQLNGTEVALLKSGIGKVAAALGATLLLEHCKPDVIINTGSAGGLAPTLKVGDIVVSDEARYHDADVTAFGYEYGQLPGCPAGFKADDKLIAAAEACIAELNLNAVRGLIVSGDAFINGSVGLAKIRHNFPQAIAVEMEATAIAHVCHNFNVPFVVVRAISDVADQQSHLSFDEFLAVAAKQSSLMVESLVQKLAHG.

Glu-12 functions as the Proton acceptor in the catalytic mechanism. Residues Gly-78, Ile-152, and 173–174 each bind substrate; that span reads ME. Asp-197 serves as the catalytic Proton donor.

This sequence belongs to the PNP/UDP phosphorylase family. MtnN subfamily. Homodimer.

The enzyme catalyses S-adenosyl-L-homocysteine + H2O = S-(5-deoxy-D-ribos-5-yl)-L-homocysteine + adenine. It carries out the reaction S-methyl-5'-thioadenosine + H2O = 5-(methylsulfanyl)-D-ribose + adenine. It catalyses the reaction 5'-deoxyadenosine + H2O = 5-deoxy-D-ribose + adenine. It functions in the pathway amino-acid biosynthesis; L-methionine biosynthesis via salvage pathway; S-methyl-5-thio-alpha-D-ribose 1-phosphate from S-methyl-5'-thioadenosine (hydrolase route): step 1/2. In terms of biological role, catalyzes the irreversible cleavage of the glycosidic bond in both 5'-methylthioadenosine (MTA) and S-adenosylhomocysteine (SAH/AdoHcy) to adenine and the corresponding thioribose, 5'-methylthioribose and S-ribosylhomocysteine, respectively. Also cleaves 5'-deoxyadenosine, a toxic by-product of radical S-adenosylmethionine (SAM) enzymes, into 5-deoxyribose and adenine. Thus, is required for in vivo function of the radical SAM enzymes biotin synthase and lipoic acid synthase, that are inhibited by 5'-deoxyadenosine accumulation. The polypeptide is 5'-methylthioadenosine/S-adenosylhomocysteine nucleosidase (Escherichia coli O9:H4 (strain HS)).